The following is a 169-amino-acid chain: Pyrophosphate-energized proton pump 1 (169 aa).

Transmembrane regions (helical) follow at residues 45-65, 114-134, and 141-161; these read YVVA…GIAM, VIPS…VLLI, and AFAA…LVAI.

Belongs to the H(+)-translocating pyrophosphatase (TC 3.A.10) family. In terms of assembly, homodimer. It depends on Mg(2+) as a cofactor.

The protein resides in the cell inner membrane. The catalysed reaction is diphosphate + H2O + H(+)(in) = 2 phosphate + 2 H(+)(out). Proton pump that utilizes the energy of pyrophosphate hydrolysis as the driving force for proton movement across the membrane. Generates a proton motive force. The protein is Pyrophosphate-energized proton pump 1 (hppA1) of Rhizobium leguminosarum bv. trifolii.